The sequence spans 368 residues: Biglycan (368 aa).

The signal sequence occupies residues 1–16 (MWPLWRLVSLLALSQA). Residues 17-37 (LPFEQRGFWDFTLDDGPFMMN) constitute a propeptide that is removed on maturation. Serine 42 and serine 47 each carry an O-linked (Xyl...) (glycosaminoglycan) serine glycan. Intrachain disulfides connect cysteine 63–cysteine 69 and cysteine 67–cysteine 76. LRR repeat units follow at residues 82–102 (KSVPKEISPDTTLLDLQNNDI), 103–126 (SELRKDDFKGLQHLYALVLVNNKI), 127–150 (SKIHEKAFSPLRKLQKLYISKNHL), 151–171 (VEIPPNLPSSLVELRIHDNRI), 172–195 (RKVPKGVFSGLRNMNCIEMGGNPL), 196–220 (ENSGFEPGAFDGLKLNYLRISEAKL), 221–241 (TGIPKDLPETLNELHLDHNKI), 242–265 (QAIELEDLLRYSKLYRLGLGHNQI), 266–289 (RMIENGSLSFLPTLRELHLDNNKL), 290–312 (ARVPSGLPDLKLLQVVYLHSNNI), 313–342 (TKVGVNDFCPMGFGVKRAYYNGISLFNNPV), and 343–368 (PYWEVQPATFRCVTDRLAIQFGNYKK). O-linked (Xyl...) (glycosaminoglycan) serine glycans are attached at residues serine 180 and serine 198. Residues asparagine 270 and asparagine 311 are each glycosylated (N-linked (GlcNAc...) asparagine). An intrachain disulfide couples cysteine 321 to cysteine 354.

This sequence belongs to the small leucine-rich proteoglycan (SLRP) family. SLRP class I subfamily. As to quaternary structure, homodimer. Forms a ternary complex with MFAP2 and ELN. Post-translationally, the two attached glycosaminoglycan chains can be either chondroitin sulfate or dermatan sulfate. As to expression, detected in placenta (at protein level). Found in several connective tissues, especially in articular cartilages.

It is found in the secreted. The protein localises to the extracellular space. The protein resides in the extracellular matrix. In terms of biological role, may be involved in collagen fiber assembly. This Homo sapiens (Human) protein is Biglycan (BGN).